Reading from the N-terminus, the 406-residue chain is Magnesium transporter NIPA4 (406 aa).

Residues 1–57 (MELRVANANGSCENGSIVSLYCSSQEVLCQIVRGISPEEPYNATLITWQERVRKKYG) are Extracellular-facing. 3 N-linked (GlcNAc...) asparagine glycosylation sites follow: Asn-9, Asn-14, and Asn-42. The helical transmembrane segment at 58–78 (FYIGVGLAFLSCFLIGTSVIL) threads the bilayer. Residues 79-126 (KKKGLIRLVATGATRAVNGGYGYLKDPMWWAGMATMSAGEVANFGAYA) lie on the Cytoplasmic side of the membrane. Residues 127-147 (FAPATVVTPLGALSVLISAIF) traverse the membrane as a helical segment. Residues 148–155 (SSYCLGES) are Extracellular-facing. The chain crosses the membrane as a helical span at residues 156 to 176 (LNLLGKLGCVICMAGSTVMVI). Topologically, residues 177-197 (HAPKEEKVTTVAEMASKMKDT) are cytoplasmic. A helical membrane pass occupies residues 198 to 218 (GFIVFAVLLVVSCLILIFIVA). Topologically, residues 219-225 (PRYGQRN) are extracellular. A helical transmembrane segment spans residues 226 to 246 (ILIYIIICSVIGSFSVTAVKG). The Cytoplasmic portion of the chain corresponds to 247 to 263 (LGVTIRNFFQGLPVVRH). The chain crosses the membrane as a helical span at residues 264–284 (PLPYILSLILGLSIIIQVNFL). Residues 285 to 295 (NRALDIFNTSL) lie on the Extracellular side of the membrane. Asn-292 carries N-linked (GlcNAc...) asparagine glycosylation. Residues 296 to 316 (VFPIYYVFFTTVVVASSIVLF) form a helical membrane-spanning segment. The Cytoplasmic portion of the chain corresponds to 317–326 (KEWYTMSAVD). Residues 327-347 (IVGTLSGFVTIILGVFMLHAF) traverse the membrane as a helical segment. Topologically, residues 348–406 (KDLDINQISLPHTHKNPTPAPAPEPTVIKLEDKNVLVDNIELASTPSPQQKPKVFMTDS) are extracellular.

The protein belongs to the NIPA family.

Its subcellular location is the cell membrane. It carries out the reaction Mg(2+)(in) = Mg(2+)(out). Acts as a Mg(2+) transporter. Can also transport other divalent cations such as Ba(2+), Sr(2+) and Fe(2+) but to a much less extent than Mg(2+). May be a receptor for ligands (trioxilins A3 and B3) from the hepoxilin pathway. This chain is Magnesium transporter NIPA4 (Nipal4), found in Mus musculus (Mouse).